The chain runs to 300 residues: Zinc finger CCCH domain-containing protein 14 (300 aa).

Residues 1-38 (MEVGGRKRGKPDGANGAGGKRARESESFQTGVGSKSKP) form a disordered region. 2 C3H1-type zinc fingers span residues 33–61 (GSKS…HHFP) and 99–127 (TVKT…HGER). The KH domain maps to 170-234 (SATAKISVDA…DQIKNASAMV (65 aa)). The interval 243–262 (GGAPPQGKKPVGGSHRGGGP) is disordered. The segment at 265-292 (NFKTKLCENFTKGSCTFGDRCHFAHGEN) adopts a C3H1-type 3 zinc-finger fold.

The protein is Zinc finger CCCH domain-containing protein 14 of Oryza sativa subsp. japonica (Rice).